The following is a 367-amino-acid chain: MALSAIGFEGYEKRLEVSFFEPSFFQDSKGLGLRALTRSQLDEILTPAACEIVSSLSNDHLDSYVLSESSFFVYPYKVIIKTCGTTKLLLSIPPLLKLAGELSLSVKSVKYTRGSFLCPGGQPFPHRSFSEEVSVLDGHFTKLGLNSVAYLMGNDDENKKWHVYAASAQTSSDCNNNVYTLEMCMTGLDKEKASVFYKNETGGENGSMTDNSGIRKILPKSQICDFEFEPCGYSMNSVEGDAISTIHVTPEDGFSYASFEAVGYDFNTLDLSQLVTRVLSCFEPKQFSVAVHSSVGSNAYKPEISVDLEDYGCRERTFESLGEESGTVMYQTFEKLGKYCGSPRSTLKCEWSSNNSCSSEDEKDEGI.

Residues E9 and E12 contribute to the active site. S69 serves as the catalytic Schiff-base intermediate with substrate; via pyruvic acid. A Pyruvic acid (Ser); by autocatalysis modification is found at S69. C83 functions as the Proton donor; for catalytic activity in the catalytic mechanism. Active-site proton acceptor; for processing activity residues include S234 and H247.

Belongs to the eukaryotic AdoMetDC family. Pyruvate is required as a cofactor. Post-translationally, is synthesized initially as an inactive proenzyme. Formation of the active enzyme involves a self-maturation process in which the active site pyruvoyl group is generated from an internal serine residue via an autocatalytic post-translational modification. Two non-identical subunits are generated from the proenzyme in this reaction, and the pyruvate is formed at the N-terminus of the alpha chain, which is derived from the carboxyl end of the proenzyme. The post-translation cleavage follows an unusual pathway, termed non-hydrolytic serinolysis, in which the side chain hydroxyl group of the serine supplies its oxygen atom to form the C-terminus of the beta chain, while the remainder of the serine residue undergoes an oxidative deamination to produce ammonia and the pyruvoyl group blocking the N-terminus of the alpha chain.

The enzyme catalyses S-adenosyl-L-methionine + H(+) = S-adenosyl 3-(methylsulfanyl)propylamine + CO2. The protein operates within amine and polyamine biosynthesis; S-adenosylmethioninamine biosynthesis; S-adenosylmethioninamine from S-adenosyl-L-methionine: step 1/1. The sequence is that of S-adenosylmethionine decarboxylase proenzyme 3 (SAMDC3) from Brassica juncea (Indian mustard).